A 175-amino-acid polypeptide reads, in one-letter code: Diacylglycerol kinase (175 aa).

The next 2 helical transmembrane spans lie at V55–A75 and L96–I116. Catalysis depends on E118, which acts as the Proton acceptor. A divalent metal cation is bound at residue E125. Residues V151–L171 traverse the membrane as a helical segment.

The protein belongs to the bacterial diacylglycerol kinase family. The cofactor is Mg(2+).

The protein localises to the cell membrane. It catalyses the reaction a 1,2-diacyl-sn-glycerol + ATP = a 1,2-diacyl-sn-glycero-3-phosphate + ADP + H(+). Its function is as follows. Catalyzes the ATP-dependent phosphorylation of sn-l,2-diacylglycerol (DAG) to phosphatidic acid. The protein is Diacylglycerol kinase (dgkA) of Synechocystis sp. (strain ATCC 27184 / PCC 6803 / Kazusa).